The sequence spans 240 residues: DNA repair protein RecO (240 aa).

The protein belongs to the RecO family.

Its function is as follows. Involved in DNA repair and RecF pathway recombination. The chain is DNA repair protein RecO from Actinobacillus pleuropneumoniae serotype 3 (strain JL03).